We begin with the raw amino-acid sequence, 492 residues long: Histone-lysine N-methyltransferase SUVR4 (492 aa).

Residues 112 to 138 (ETRSASSGSSIQVVQKQPQLSNGDRKR) form a disordered region. Residues 113–133 (TRSASSGSSIQVVQKQPQLSN) show a composition bias toward polar residues. Residues C196, C197, C200, C204, C213, C281, C285, C287, and C291 each contribute to the Zn(2+) site. One can recognise a Pre-SET domain in the interval 196-299 (CCANCKGNCL…QCGNRVVQRG (104 aa)). Positions 302–435 (CQLQVYFTQE…AMDELTWDYM (134 aa)) constitute an SET domain. S-adenosyl-L-methionine is bound by residues 313 to 315 (KGW) and 391 to 392 (NH). Position 394 (C394) interacts with Zn(2+). Residue Y434 participates in S-adenosyl-L-methionine binding. The Post-SET domain maps to 446 to 462 (KAFRCCCGSESCRDRKI). The Zn(2+) site is built by C450, C452, and C457. Residues 463–492 (KGSQGKSIERRKIVSAKKQQGSKEVSKKRK) form a disordered region.

The protein belongs to the class V-like SAM-binding methyltransferase superfamily. Histone-lysine methyltransferase family. Interacts with ubiquitin.

Its subcellular location is the nucleus. It localises to the chromosome. It carries out the reaction N(6)-methyl-L-lysyl(9)-[histone H3] + S-adenosyl-L-methionine = N(6),N(6)-dimethyl-L-lysyl(9)-[histone H3] + S-adenosyl-L-homocysteine + H(+). It catalyses the reaction N(6),N(6)-dimethyl-L-lysyl(9)-[histone H3] + S-adenosyl-L-methionine = N(6),N(6),N(6)-trimethyl-L-lysyl(9)-[histone H3] + S-adenosyl-L-homocysteine + H(+). Functionally, histone methyltransferase that converts monomethylated 'Lys-9' of histone H3 (H3K9me1) to dimethylated 'Lys-9' (H3K9me2) in the absence of bound ubiquitin, and to trimethylated 'Lys-9' (H3K9me3) in the presence of bound ubiquitin. Acts in a locus-specific manner and contributes to the transcriptional silencing of pseudogenes and transposons. H3 'Lys-9' methylation represents a specific tag for epigenetic transcriptional repression. The protein is Histone-lysine N-methyltransferase SUVR4 (SUVR4) of Arabidopsis thaliana (Mouse-ear cress).